Reading from the N-terminus, the 147-residue chain is Large ribosomal subunit protein uL11 (147 aa).

Belongs to the universal ribosomal protein uL11 family. In terms of assembly, part of the ribosomal stalk of the 50S ribosomal subunit. Interacts with L10 and the large rRNA to form the base of the stalk. L10 forms an elongated spine to which L12 dimers bind in a sequential fashion forming a multimeric L10(L12)X complex. One or more lysine residues are methylated.

Forms part of the ribosomal stalk which helps the ribosome interact with GTP-bound translation factors. The chain is Large ribosomal subunit protein uL11 from Sorangium cellulosum (strain So ce56) (Polyangium cellulosum (strain So ce56)).